Consider the following 250-residue polypeptide: Probable phosphatase VPA1527 (250 aa).

Zn(2+) is bound by residues H8, H10, H16, H41, E74, H102, H132, D194, and H196.

This sequence belongs to the PHP family. The cofactor is Zn(2+).

In Vibrio parahaemolyticus serotype O3:K6 (strain RIMD 2210633), this protein is Probable phosphatase VPA1527.